Here is a 304-residue protein sequence, read N- to C-terminus: Mitochondrial glycine transporter (304 aa).

Solcar repeat units follow at residues 25–114 (HPVI…LKQY), 121–205 (PTAL…TKNI), and 215–299 (LIPI…MMAK). A run of 6 helical transmembrane segments spans residues 31 to 56 (FLCG…TRLQ), 89 to 115 (GMSP…KQYF), 127 to 152 (VMLG…TRYE), 180 to 203 (GLTA…NQTK), 219 to 245 (TNFS…KTHM), and 274 to 292 (GGIP…AWTV).

Belongs to the mitochondrial carrier (TC 2.A.29) family. SLC25A38 subfamily. As to expression, preferentially expressed in erythroid cells.

It is found in the mitochondrion inner membrane. The enzyme catalyses glycine(in) = glycine(out). Its function is as follows. Mitochondrial glycine transporter that imports glycine into the mitochondrial matrix. Plays an important role in providing glycine for the first enzymatic step in heme biosynthesis, the condensation of glycine with succinyl-CoA to produce 5-aminolevulinate (ALA) in the mitochondrial matrix. Required during erythropoiesis. Functionally, plays a role as pro-apoptotic protein that induces caspase-dependent apoptosis. In Homo sapiens (Human), this protein is Mitochondrial glycine transporter.